The following is a 443-amino-acid chain: MSQFSRRKFLLTAGGTAAAALWLNACGSNNSSTDTTGSTSTPAPSGTSGGDAPEVKGVTLGFIALTDAAPVIIALEKGLFAKYGLPDTKVVKQTSWAVTRDNLELGSDRGGIDGAHILSPMPYLLTAGTITKSQKPLPMYILARLNTQGQGISLSNEFLAEKVQIKDPKLKAIADQKKASGKLLKAAVTFPGGTHDLWMRYWLAANGIDPNNDADLVVIPPPQMVANMQTGTMDTFCVGEPWNARLVNKKLGYTAAVTGELWKFHPEKALTIRADWADKNPKATMALLKAVQEAQIWCEDPANLDELCQITAQDKYFKTSVEDIKPRLQGDIDYGDGRSVKNSDLRMRFWSENASFPYKSHDLWFLTEDIRWGYLPASTDTKALIEKVNRSDLWREAAKAIGREQDIPASDSRGVETFFDGVTFDPENPQAYLDGLKFKAIKA.

The N-terminal stretch at 1–25 (MSQFSRRKFLLTAGGTAAAALWLNA) is a signal peptide. A lipid anchor (N-palmitoyl cysteine) is attached at Cys26. Cys26 carries S-diacylglycerol cysteine lipidation. Over residues 31–46 (SSTDTTGSTSTPAPSG) the composition is skewed to low complexity. The interval 31–52 (SSTDTTGSTSTPAPSGTSGGDA) is disordered. The nitrate site is built by Trp96, Gln150, His195, Gly239, and Lys268.

Belongs to the CmpA/NrtA family. As to quaternary structure, the complex is composed of two ATP-binding proteins (NrtC and NrtD), two transmembrane proteins (NrtB) and a solute-binding protein (NrtA). NrtA can form homotrimers. Post-translationally, the N-terminus is blocked.

It localises to the cell inner membrane. Part of the ABC transporter complex NrtABCD involved in nitrate uptake. The complex is probably also involved in nitrite transport. NrtA is the substrate-binding protein. Binds both nitrate and nitrite with high affinity. This Synechococcus elongatus (strain ATCC 33912 / PCC 7942 / FACHB-805) (Anacystis nidulans R2) protein is Nitrate/nitrite binding protein NrtA.